A 139-amino-acid chain; its full sequence is Probable disulfide formation protein C 2 (139 aa).

The helical transmembrane segment at K6–F25 threads the bilayer. C35 and C38 are oxidised to a cystine. 2 helical membrane-spanning segments follow: residues Y40 to K59 and Y66 to T83. C95 and C101 are joined by a disulfide. A helical transmembrane segment spans residues G110 to S133.

This sequence belongs to the DsbB family. BdbC subfamily.

It localises to the cell membrane. Functionally, required for disulfide bond formation in some proteins. This is Probable disulfide formation protein C 2 (bdbC2) from Bacillus cereus (strain ATCC 10987 / NRS 248).